The sequence spans 338 residues: Ketol-acid reductoisomerase (NADP(+)) (338 aa).

A KARI N-terminal Rossmann domain is found at Met-1–Thr-181. Residues Tyr-24–Gln-27, Arg-47, and Ser-52 each bind NADP(+). The active site involves His-107. Gly-133 contacts NADP(+). In terms of domain architecture, KARI C-terminal knotted spans Asn-182–Ile-327. Positions 190, 194, 226, and 230 each coordinate Mg(2+). A substrate-binding site is contributed by Ser-251.

Belongs to the ketol-acid reductoisomerase family. Mg(2+) serves as cofactor.

It catalyses the reaction (2R)-2,3-dihydroxy-3-methylbutanoate + NADP(+) = (2S)-2-acetolactate + NADPH + H(+). The catalysed reaction is (2R,3R)-2,3-dihydroxy-3-methylpentanoate + NADP(+) = (S)-2-ethyl-2-hydroxy-3-oxobutanoate + NADPH + H(+). It participates in amino-acid biosynthesis; L-isoleucine biosynthesis; L-isoleucine from 2-oxobutanoate: step 2/4. The protein operates within amino-acid biosynthesis; L-valine biosynthesis; L-valine from pyruvate: step 2/4. In terms of biological role, involved in the biosynthesis of branched-chain amino acids (BCAA). Catalyzes an alkyl-migration followed by a ketol-acid reduction of (S)-2-acetolactate (S2AL) to yield (R)-2,3-dihydroxy-isovalerate. In the isomerase reaction, S2AL is rearranged via a Mg-dependent methyl migration to produce 3-hydroxy-3-methyl-2-ketobutyrate (HMKB). In the reductase reaction, this 2-ketoacid undergoes a metal-dependent reduction by NADPH to yield (R)-2,3-dihydroxy-isovalerate. The chain is Ketol-acid reductoisomerase (NADP(+)) from Paracidovorax citrulli (strain AAC00-1) (Acidovorax citrulli).